The following is a 133-amino-acid chain: Single-stranded DNA-binding protein 2 (133 aa).

Residues 1–103 (MNKTILIGRL…VVAEEVKFLE (103 aa)) enclose the SSB domain.

Homotetramer.

The sequence is that of Single-stranded DNA-binding protein 2 (ssb2) from Clostridium acetobutylicum (strain ATCC 824 / DSM 792 / JCM 1419 / IAM 19013 / LMG 5710 / NBRC 13948 / NRRL B-527 / VKM B-1787 / 2291 / W).